The following is a 246-amino-acid chain: MALIEGVGDEVTILFSALACLLVLALAWVSTHTAEGADPLPQPSGTPTPTQPSEAMAVTDSIRGEAPGAETPGLRHRGQAAPPEPSVGLAATPPPPDSPQEPLVLRLKFLNDSEQVARAWPHDTIGSLKRTQFPGREQHVRLIYQGQLLGDDTQTLGSLHLPPNCVLHCHVSTRVGPPLPPCPPGSEPGPSGLEVGSLLLPLLLLLLLLLWYCQIQYRPFFPLTATLGLAGFTLLLSLLAFAMYRP.

The required to release iHOPS from membranes stretch occupies residues 2–30 (ALIEGVGDEVTILFSALACLLVLALAWVS). A helical membrane pass occupies residues 11-31 (VTILFSALACLLVLALAWVST). The disordered stretch occupies residues 35–102 (EGADPLPQPS…PPPPDSPQEP (68 aa)). Positions 40 to 50 (LPQPSGTPTPT) are enriched in pro residues. Residues T71 and T92 each carry the phosphothreonine modification. Phosphoserine occurs at positions 98 and 127. One can recognise a Ubiquitin-like domain in the interval 103–176 (LVLRLKFLND…LHCHVSTRVG (74 aa)). 2 helical membrane-spanning segments follow: residues 195-215 (VGSLLLPLLLLLLLLLWYCQI) and 221-241 (FPLTATLGLAGFTLLLSLLAF).

Interacts with EEF1A1, GRIA2, GRIP1, CAMLG, TUBG1. Interacts with NPM1 and CDKN2A; TMUB1 can enhance interaction between NPM1 and CDKN2A and is proposed to bridge the proteins; proposed to be mediated by iHOPS. Interacts with ERLIN2 and AMFR; TMUB1 promotes the interaction of ERLIN2 with AMFR. Post-translationally, processed by regulated intramembrane proteolysis (RIP) in the N-terminus to release iHOPS from membranes.

The protein resides in the membrane. The protein localises to the postsynaptic cell membrane. It is found in the recycling endosome. Its subcellular location is the cytoplasm. It localises to the nucleus. The protein resides in the nucleolus. The protein localises to the cytoskeleton. It is found in the microtubule organizing center. Its subcellular location is the centrosome. Its function is as follows. Involved in sterol-regulated ubiquitination and degradation of HMG-CoA reductase HMGCR. Involved in positive regulation of AMPA-selective glutamate receptor GRIA2 recycling to the cell surface. Acts as negative regulator of hepatocyte growth during regeneration. In terms of biological role, may contribute to the regulation of translation during cell-cycle progression. May contribute to the regulation of cell proliferation. May be involved in centrosome assembly. Modulates stabilization and nucleolar localization of tumor suppressor CDKN2A and enhances association between CDKN2A and NPM1. In Bos taurus (Bovine), this protein is Transmembrane and ubiquitin-like domain-containing protein 1 (TMUB1).